The following is a 218-amino-acid chain: MKVYVLRIGHRPDRDKRITTHVGLVARAFGAHGFVLSPCDEKVLEKLRDVEERWGRLLEEIACTNSPLKYVKTWDGTVVHLTMYGLPVDSVIDEIRQKDKILVIVGAEKVPREYYELAHYNVAIGNQPHSEVAALAIFLDRLYGGAELYRQPVGGKLRIIPTEKGKKVVKVGEEGPSGGAPGVRAERGRGGRGEGVQGADEVRGHKRGATDRDLGDET.

S-adenosyl-L-methionine-binding positions include Leu-81, 106 to 110 (GAEKV), and 124 to 131 (IGNQPHSE). The segment at 170 to 218 (KVGEEGPSGGAPGVRAERGRGGRGEGVQGADEVRGHKRGATDRDLGDET) is disordered. The span at 200 to 218 (DEVRGHKRGATDRDLGDET) shows a compositional bias: basic and acidic residues.

The protein belongs to the aTrm56 family. As to quaternary structure, homodimer.

The protein resides in the cytoplasm. The enzyme catalyses cytidine(56) in tRNA + S-adenosyl-L-methionine = 2'-O-methylcytidine(56) in tRNA + S-adenosyl-L-homocysteine + H(+). Specifically catalyzes the AdoMet-dependent 2'-O-ribose methylation of cytidine at position 56 in tRNAs. This chain is tRNA (cytidine(56)-2'-O)-methyltransferase, found in Ignicoccus hospitalis (strain KIN4/I / DSM 18386 / JCM 14125).